Consider the following 397-residue polypeptide: MTIRNQRFSLLKQPIYSTLNQHLIDYPTPSNLSYWWGFGSLAGICLVIQIVTGVFLAMHYTPHVDLAFNSVEHIMRDVEGGWLLRYMHANGASMFFIVVYLHIFRGLYYASYSSPREFVWCLGVVIFLLMIVTAFIGYVLPWGQMSFWGATVITSLASAIPVVGDTIVTWLWGGFSVDNATLNRFFSLHYLLPFILVGASLLHLAALHQYGSNNPLGVHSEMDKIAFYPYFYVKDLVGWVAFAIFFSIWIFFAPNVLGHPDNYIPANPMSTPPHIVPEWYFLPIYAILRSIPDKAGGVAAIALVFISLLALPFFKEMYVRSSSFRPIYQGIFWLLLADCLLLGWIGCQPVEAPFVTIGQISSFFFFLFFAITPILGRVGRGIPKYYTDETHRTGSVS.

4 consecutive transmembrane segments (helical) span residues 38-58, 82-104, 119-139, and 185-205; these read FGSLAGICLVIQIVTGVFLAM, WLLRYMHANGASMFFIVVYLHIF, VWCLGVVIFLLMIVTAFIGYV, and FFSLHYLLPFILVGASLLHLA. Heme b contacts are provided by H88 and H102. 2 residues coordinate heme b: H189 and H203. Position 208 (H208) interacts with a ubiquinone. Transmembrane regions (helical) follow at residues 231–251, 295–315, 327–347, and 354–373; these read FYVKDLVGWVAFAIFFSIWIF, AGGVAAIALVFISLLALPFFK, IYQGIFWLLLADCLLLGWIGC, and FVTIGQISSFFFFLFFAITP.

This sequence belongs to the cytochrome b family. As to quaternary structure, the main subunits of complex b-c1 are: cytochrome b, cytochrome c1 and the Rieske protein. Requires heme b as cofactor.

Its subcellular location is the mitochondrion inner membrane. Functionally, component of the ubiquinol-cytochrome c reductase complex (complex III or cytochrome b-c1 complex) that is part of the mitochondrial respiratory chain. The b-c1 complex mediates electron transfer from ubiquinol to cytochrome c. Contributes to the generation of a proton gradient across the mitochondrial membrane that is then used for ATP synthesis. This chain is Cytochrome b (MT-CYB), found in Oryza sativa subsp. japonica (Rice).